A 123-amino-acid polypeptide reads, in one-letter code: Large ribosomal subunit protein bL12 (123 aa).

It belongs to the bacterial ribosomal protein bL12 family. Homodimer. Part of the ribosomal stalk of the 50S ribosomal subunit. Forms a multimeric L10(L12)X complex, where L10 forms an elongated spine to which 2 to 4 L12 dimers bind in a sequential fashion. Binds GTP-bound translation factors.

Forms part of the ribosomal stalk which helps the ribosome interact with GTP-bound translation factors. Is thus essential for accurate translation. The sequence is that of Large ribosomal subunit protein bL12 from Rhodospirillum rubrum (strain ATCC 11170 / ATH 1.1.1 / DSM 467 / LMG 4362 / NCIMB 8255 / S1).